The sequence spans 266 residues: Translation initiation factor 2 subunit alpha (266 aa).

Positions 12–83 constitute an S1 motif domain; the sequence is GEILIATVKQ…RKGTVDVSLK (72 aa).

The protein belongs to the eIF-2-alpha family. In terms of assembly, heterotrimer composed of an alpha, a beta and a gamma chain.

In terms of biological role, eIF-2 functions in the early steps of protein synthesis by forming a ternary complex with GTP and initiator tRNA. The chain is Translation initiation factor 2 subunit alpha from Saccharolobus islandicus (strain L.S.2.15 / Lassen #1) (Sulfolobus islandicus).